The chain runs to 205 residues: MTTQYGFFIDSSRCTGCKTCELACKDFKDLGPEVSFRRIYEYAGGDWQEDNGVWHQNVFAYYLSISCNHCDDPACTKVCPSGAMHKREDGFVVVDEDVCIGCRYCHMACPYGAPQYNAEKGHMTKCDGCYSRVAEGKQPICVESCPLRALEFGPIEELRQKHGTLAAVAPLPRAHFTKPNIVIKPNANSRPTGDTTGYLANPEEV.

3 4Fe-4S ferredoxin-type domains span residues 5 to 33 (YGFF…LGPE), 59 to 89 (FAYY…KRED), and 90 to 119 (GFVV…YNAE). [4Fe-4S] cluster is bound by residues Cys14, Cys17, Cys20, Cys24, Cys67, Cys70, Cys75, Cys79, Cys99, Cys102, Cys105, Cys109, Cys126, Cys129, Cys141, and Cys145. The disordered stretch occupies residues 183–205 (IKPNANSRPTGDTTGYLANPEEV). The segment covering 186-195 (NANSRPTGDT) has biased composition (polar residues).

The complex consists of three subunits: YnfF, the reductase; YnfG, an electron transfer protein, and YnfH, a membrane anchor protein. [4Fe-4S] cluster is required as a cofactor.

Functionally, electron transfer subunit of the terminal reductase during anaerobic growth on various sulfoxide and N-oxide compounds. In Escherichia coli O6:H1 (strain CFT073 / ATCC 700928 / UPEC), this protein is Probable anaerobic dimethyl sulfoxide reductase chain YnfG (ynfG).